We begin with the raw amino-acid sequence, 603 residues long: Sorting nexin-41 (603 aa).

The tract at residues 1-36 (MNSFRESDEEDNNPFSGTNHLYASGIGAVPEGDDDF) is disordered. In terms of domain architecture, PX spans 121–241 (AEGSLGALRI…QKFLNPEYIW (121 aa)). The a 1,2-diacyl-sn-glycero-3-phospho-(1D-myo-inositol-3-phosphate) site is built by R159, S161, K185, and R208.

It belongs to the sorting nexin family.

It is found in the endosome membrane. The protein localises to the endomembrane system. Functionally, may be required for cytoplasm to vacuole transport (Cvt) and pexophagy. This is Sorting nexin-41 (SNX41) from Eremothecium gossypii (strain ATCC 10895 / CBS 109.51 / FGSC 9923 / NRRL Y-1056) (Yeast).